Consider the following 139-residue polypeptide: Nucleoside diphosphate kinase (139 aa).

Residues Lys9, Phe57, Arg85, Thr91, Arg102, and Asn112 each coordinate ATP. His115 functions as the Pros-phosphohistidine intermediate in the catalytic mechanism.

Belongs to the NDK family. Homotetramer. It depends on Mg(2+) as a cofactor.

The protein localises to the cytoplasm. The enzyme catalyses a 2'-deoxyribonucleoside 5'-diphosphate + ATP = a 2'-deoxyribonucleoside 5'-triphosphate + ADP. It catalyses the reaction a ribonucleoside 5'-diphosphate + ATP = a ribonucleoside 5'-triphosphate + ADP. In terms of biological role, major role in the synthesis of nucleoside triphosphates other than ATP. The ATP gamma phosphate is transferred to the NDP beta phosphate via a ping-pong mechanism, using a phosphorylated active-site intermediate. This chain is Nucleoside diphosphate kinase, found in Exiguobacterium sp. (strain ATCC BAA-1283 / AT1b).